The chain runs to 682 residues: MNGDLEVDMSRGDFNPSFFLGKLKDDEFESRSLSDDSFDAMSGDEDKQEQRPKKKKRKTKYHRHTSYQIQELESFFKECPHPNEKQRLELGKKLTLESKQIKFWFQNRRTQMKTQLERHENVILKQENEKLRLENSFLKESMRGSLCIDCGGAVIPGEVSFEQHQLRIENAKLKEELDRICALANRFIGGSISLEQPSNGGIGSQHLPIGHCVSGGTSLMFMDLAMEAMDELLKLAELETSLWSSKSEKGSMNHFPGSRETGLVLINSLALVETLMDTNKWAEMFECIVAVASTLEVISNGSDGSRNGSILLMQAEFQVMSPLVPIKQKKFLRYCKQHGDGLWAVVDVSYDINRGNENLKSYGGSKMFPSGCIIQDIGNGCSKVTWIEHSEYEESHTHSLYQPLLSSSVGLGATKWLATLQRQCESFTMLLSSEDHTGLSHAGTKSILKLAQRMKLNFYSGITASCIHKWEKLLAENVGQDTRILTRKSLEPSGIVLSAATSLWLPVTQQRLFEFLCDGKCRNQWDILSNGASMENTLLVPKGQQEGSCVSLLRAAGNDQNESSMLILQETWNDVSGALVVYAPVDIPSMNTVMSGGDSAYVALLPSGFSILPDGSSSSSDQFDTDGGLVNQESKGCLLTVGFQILVNSLPTAKLNVESVETVNNLIACTIHKIRAALRIPA.

A disordered region spans residues 33-65; it reads LSDDSFDAMSGDEDKQEQRPKKKKRKTKYHRHT. The segment covering 52–65 has biased composition (basic residues); that stretch reads PKKKKRKTKYHRHT. The segment at residues 57–116 is a DNA-binding region (homeobox); it reads RKTKYHRHTSYQIQELESFFKECPHPNEKQRLELGKKLTLESKQIKFWFQNRRTQMKTQL. The stretch at 105–186 forms a coiled coil; the sequence is FQNRRTQMKT…LDRICALANR (82 aa). The START domain maps to 214–429; the sequence is SGGTSLMFMD…LQRQCESFTM (216 aa).

Belongs to the HD-ZIP homeobox family. Class IV subfamily. As to quaternary structure, interacts with AIL7/PLT7. Expressed in cells around the base of leaf primordia, in the outermost 2 to 3 cell layers along the boundary between two leaf primordia. Expressed in lateral root primordia and tips, and in the epidermal boundaries of two cotyledons at heart-stage embryo.

It is found in the nucleus. Its function is as follows. Probable transcription factor that binds to the DNA sequence 5'-GCATTAAATGC-3'. Seems to promote cell differentiation. The sequence is that of Homeobox-leucine zipper protein HDG7 from Arabidopsis thaliana (Mouse-ear cress).